The sequence spans 624 residues: Bifunctional 3'-phosphoadenosine 5'-phosphosulfate synthase 1 (624 aa).

Position 1 is an N-acetylmethionine (Met-1). The interval 1 to 225 (MELPGSLCKK…VVELLQERDI (225 aa)) is adenylyl-sulfate kinase. Lys-12 is subject to N6-acetyllysine. 62–67 (GAGKTT) contacts ATP. Adenosine 5'-phosphosulfate-binding positions include 89–92 (DNIR), Phe-101, 106–109 (REEN), 132–133 (IS), Lys-171, and 184–185 (GF). ATP-binding positions include Cys-207, Cys-212, 419–422 (QLRN), 521–525 (GRDPA), and Ala-563. The interval 234–624 (VKELYVPENK…AEYYKALEKA (391 aa)) is sulfate adenylyltransferase.

In the N-terminal section; belongs to the APS kinase family. The protein in the C-terminal section; belongs to the sulfate adenylyltransferase family. As to quaternary structure, homodimer.

It carries out the reaction sulfate + ATP + H(+) = adenosine 5'-phosphosulfate + diphosphate. It catalyses the reaction adenosine 5'-phosphosulfate + ATP = 3'-phosphoadenylyl sulfate + ADP + H(+). The protein operates within sulfur metabolism; sulfate assimilation. In terms of biological role, bifunctional enzyme with both ATP sulfurylase and APS kinase activity, which mediates two steps in the sulfate activation pathway. The first step is the transfer of a sulfate group to ATP to yield adenosine 5'-phosphosulfate (APS), and the second step is the transfer of a phosphate group from ATP to APS yielding 3'-phosphoadenylylsulfate (PAPS: activated sulfate donor used by sulfotransferase). In mammals, PAPS is the sole source of sulfate; APS appears to be only an intermediate in the sulfate-activation pathway. Required for normal biosynthesis of sulfated L-selectin ligands in endothelial cells. This chain is Bifunctional 3'-phosphoadenosine 5'-phosphosulfate synthase 1 (PAPSS1), found in Cavia porcellus (Guinea pig).